A 527-amino-acid polypeptide reads, in one-letter code: MEWIADPSIWAGLITLIVIELVLGIDNLVFIAILAEKLPPKQRDRARVTGLLLAMLMRLLLLASISWLVTLTQPLFSFRSFTFSARDLIMLFGGFFLLFKATMELNERLEGKDSNNPTQRKGAKFWGVVTQIVVLDAIFSLDSVITAVGMVDHLLVMMAAVVIAISLMLMASKPLTQFVNSHPTIVILCLSFLLMIGFSLVAEGFGFVIPKGYLYAAIGFSVMIEALNQLAIFNRRRFLSANQTLRQRTTEAVMRLLSGQKEDAELDAETASMLVDHGNQQIFNPQERRMIERVLNLNQRTVSSIMTSRHDIEHIDLNAPEEEIRQLLERNQHTRLVVTDGDDAEDLLGVVHVIDLLQQSLRGEPLNLRVLIRQPLVFPETLPLLPALEQFRNARTHFAFVVDEFGSVEGIVTLSDVTETIAGNLPNEVEEIDARHDIQKNADGSWTANGHMPLEDLVQYVPLPLDEKREYHTIAGLLMEYLQRIPKPGEEVQVGDYLLKTLQVESHRVQKVQIIPLRKDGEMEYEV.

The next 5 membrane-spanning stretches (helical) occupy residues 14 to 34, 51 to 71, 81 to 101, 145 to 165, and 185 to 205; these read ITLIVIELVLGIDNLVFIAIL, LLLAMLMRLLLLASISWLVTL, FTFSARDLIMLFGGFFLLFKA, ITAVGMVDHLLVMMAAVVIAI, and IVILCLSFLLMIGFSLVAEGF. CBS domains are found at residues 306–366 and 371–429; these read MTSR…GEPL and LIRQ…PNEV.

This sequence belongs to the UPF0053 family.

Its subcellular location is the cell membrane. This Escherichia coli (strain K12) protein is UPF0053 protein YegH (yegH).